A 392-amino-acid chain; its full sequence is O-phospho-L-seryl-tRNA:Cys-tRNA synthase (392 aa).

Pyridoxal 5'-phosphate-binding positions include 84–85, Asn-191, and 214–216; these read AR and SGH. Lys-217 is modified (N6-(pyridoxal phosphate)lysine).

The protein belongs to the SepCysS family. As to quaternary structure, homodimer. Interacts with SepRS. The cofactor is pyridoxal 5'-phosphate.

The catalysed reaction is O-phospho-L-seryl-tRNA(Cys) + hydrogen sulfide + H(+) = L-cysteinyl-tRNA(Cys) + phosphate. In terms of biological role, converts O-phospho-L-seryl-tRNA(Cys) (Sep-tRNA(Cys)) to L-cysteinyl-tRNA(Cys) (Cys-tRNA(Cys)). The chain is O-phospho-L-seryl-tRNA:Cys-tRNA synthase from Methanopyrus kandleri (strain AV19 / DSM 6324 / JCM 9639 / NBRC 100938).